A 217-amino-acid chain; its full sequence is Elongation factor Ts (217 aa).

Residues 81-84 (TDFV) are involved in Mg(2+) ion dislocation from EF-Tu.

It belongs to the EF-Ts family.

It localises to the cytoplasm. Associates with the EF-Tu.GDP complex and induces the exchange of GDP to GTP. It remains bound to the aminoacyl-tRNA.EF-Tu.GTP complex up to the GTP hydrolysis stage on the ribosome. The polypeptide is Elongation factor Ts (Myxococcus xanthus (strain DK1622)).